A 404-amino-acid polypeptide reads, in one-letter code: Tryptophan synthase beta chain (404 aa).

Residue K94 is modified to N6-(pyridoxal phosphate)lysine.

Belongs to the TrpB family. As to quaternary structure, tetramer of two alpha and two beta chains. Requires pyridoxal 5'-phosphate as cofactor.

It carries out the reaction (1S,2R)-1-C-(indol-3-yl)glycerol 3-phosphate + L-serine = D-glyceraldehyde 3-phosphate + L-tryptophan + H2O. It functions in the pathway amino-acid biosynthesis; L-tryptophan biosynthesis; L-tryptophan from chorismate: step 5/5. The beta subunit is responsible for the synthesis of L-tryptophan from indole and L-serine. This chain is Tryptophan synthase beta chain, found in Staphylococcus aureus (strain JH1).